We begin with the raw amino-acid sequence, 739 residues long: Alcohol dehydrogenase (quinone), dehydrogenase subunit (739 aa).

The N-terminal stretch at 1–35 is a signal peptide; the sequence is MISAVFGKRRSLSRTLTAGTICAALISGYATMASA. Position 97 (Glu97) interacts with pyrroloquinoline quinone. Cys143 and Cys144 are disulfide-bonded. Arg149 is a binding site for pyrroloquinoline quinone. Glu217 contacts Ca(2+). Residue Thr279 participates in pyrroloquinoline quinone binding. The Ca(2+) site is built by Asn299 and Asp344. The active-site Proton acceptor is the Asp344. The pyrroloquinoline quinone site is built by Lys371 and Ile585. The region spanning 635-739 is the Cytochrome c domain; it reads FDSKRTDNGY…NADGIPEQLP (105 aa). Heme c is bound by residues Cys651, Cys654, His655, and Met694.

This sequence belongs to the bacterial PQQ dehydrogenase family. As to quaternary structure, the alcohol dehydrogenase multicomponent enzyme system is composed of a dehydrogenase subunit I (AdhA) and a cytochrome c subunit II (AdhB). It depends on pyrroloquinoline quinone as a cofactor. Ca(2+) serves as cofactor. Heme c is required as a cofactor.

Its subcellular location is the cell membrane. It catalyses the reaction ethanol + a ubiquinone = a ubiquinol + acetaldehyde. Its function is as follows. Dehydrogenase component of the alcohol dehydrogenase multicomponent enzyme system which is involved in the production of acetic acid and in the ethanol oxidase respiratory chain. Quinohemoprotein alcohol dehydrogenase (ADH) catalyzes the oxidation of ethanol to acetaldehyde by transferring electrons to the ubiquinone embedded in the membrane phospholipids. The electrons transfer from ethanol to membranous ubiquinone occurs from pyrroloquinoline quinone (PQQ) to one heme c in subunit I (AdhA), and finally to two heme c in subunit II (AdhB). Besides ubiquinone reduction, ADH also has a ubiquinol (QH2) oxidation reaction which mediates electron transfer from ubiquinol to the non-energy generating bypass oxidase system. The electrons transfer occurs from ubiquinol (QH2) to the additional heme c within subunit II (AdhB). This chain is Alcohol dehydrogenase (quinone), dehydrogenase subunit, found in Komagataeibacter europaeus (Gluconacetobacter europaeus).